The chain runs to 234 residues: Peptidyl-prolyl cis-trans isomerase, rhodopsin-specific isozyme (234 aa).

An N-terminal signal peptide occupies residues 1–19; the sequence is MNILKILILLELIYTCVSG. In terms of domain architecture, PPIase cyclophilin-type spans 29 to 187; the sequence is YMDVKHQKKP…DPVIIVNCGE (159 aa). A glycan (N-linked (GlcNAc...) asparagine) is linked at Asn-67. The helical transmembrane segment at 202-222 threads the bilayer; it reads ILGWIKAAGLPFCSSFIVLMI.

Belongs to the cyclophilin-type PPIase family. In terms of tissue distribution, expressed specifically in photoreceptor cells.

The protein localises to the membrane. It carries out the reaction [protein]-peptidylproline (omega=180) = [protein]-peptidylproline (omega=0). In terms of biological role, PPIases accelerate the folding of proteins. It catalyzes the cis-trans isomerization of proline imidic peptide bonds in oligopeptides. Acts on the folding of rhodopsin RH1 and RH2 (but not RH3) and is required for visual transduction. This is Peptidyl-prolyl cis-trans isomerase, rhodopsin-specific isozyme (NINAA) from Calliphora vicina (Blue blowfly).